Consider the following 567-residue polypeptide: Asparagine--tRNA ligase, chloroplastic/mitochondrial (567 aa).

A DNA-binding region (OB) is located at residues 113-191; it reads NIMGWVRTLR…VELKVEKIIV (79 aa).

This sequence belongs to the class-II aminoacyl-tRNA synthetase family.

The protein localises to the plastid. It localises to the chloroplast. It is found in the mitochondrion. The enzyme catalyses tRNA(Asn) + L-asparagine + ATP = L-asparaginyl-tRNA(Asn) + AMP + diphosphate + H(+). The sequence is that of Asparagine--tRNA ligase, chloroplastic/mitochondrial from Arabidopsis thaliana (Mouse-ear cress).